The following is a 319-amino-acid chain: Ubiquinone biosynthesis protein COQ4, mitochondrial (319 aa).

Residues 1-28 (MISRSIFSKSVSLQRSQNRSFLLTAASA) constitute a mitochondrion transit peptide. Residues H205, D206, H209, and E221 each coordinate Zn(2+).

This sequence belongs to the COQ4 family. As to quaternary structure, component of a multi-subunit COQ enzyme complex, composed of at least COQ3, COQ4, COQ5, COQ6, COQ7 and COQ9. The cofactor is Zn(2+).

It localises to the mitochondrion inner membrane. The catalysed reaction is a 4-hydroxy-3-methoxy-5-(all-trans-polyprenyl)benzoate + H(+) = a 2-methoxy-6-(all-trans-polyprenyl)phenol + CO2. Its pathway is cofactor biosynthesis; ubiquinone biosynthesis. Its function is as follows. Lyase that catalyzes the C1-decarboxylation of 4-hydroxy-3-methoxy-5-(all-trans-polyprenyl)benzoic acid into 2-methoxy-6-(all-trans-polyprenyl)phenol during ubiquinone biosynthesis. This Clavispora lusitaniae (strain ATCC 42720) (Yeast) protein is Ubiquinone biosynthesis protein COQ4, mitochondrial.